The chain runs to 91 residues: Small ribosomal subunit protein bS16 (91 aa).

This sequence belongs to the bacterial ribosomal protein bS16 family. As to quaternary structure, part of the 30S ribosomal subunit.

Binds to the lower part of the body of the 30S subunit, where it stabilizes two of its domains. In Thermus thermophilus, this protein is Small ribosomal subunit protein bS16.